A 199-amino-acid chain; its full sequence is Peptidyl-tRNA hydrolase (199 aa).

Position 25 (Y25) interacts with tRNA. The active-site Proton acceptor is H30. TRNA contacts are provided by Y76, N78, and N124.

Belongs to the PTH family. In terms of assembly, monomer.

The protein localises to the cytoplasm. It carries out the reaction an N-acyl-L-alpha-aminoacyl-tRNA + H2O = an N-acyl-L-amino acid + a tRNA + H(+). Its function is as follows. Hydrolyzes ribosome-free peptidyl-tRNAs (with 1 or more amino acids incorporated), which drop off the ribosome during protein synthesis, or as a result of ribosome stalling. Functionally, catalyzes the release of premature peptidyl moieties from peptidyl-tRNA molecules trapped in stalled 50S ribosomal subunits, and thus maintains levels of free tRNAs and 50S ribosomes. This Mycobacterium leprae (strain Br4923) protein is Peptidyl-tRNA hydrolase.